The chain runs to 1300 residues: Serine protease EspP (1300 aa).

The first 55 residues, M1–A55, serve as a signal peptide directing secretion. A Peptidase S6 domain is found at Q57–N311. Residues H127, D156, and S263 each act as charge relay system in the active site. Positions D1034 to F1300 constitute an Autotransporter domain.

Cleaved to release the mature protein from the outer membrane.

The protein localises to the periplasm. It is found in the secreted. The protein resides in the cell surface. It localises to the cell outer membrane. Inhibition of cytotoxic activity by phenylmethylsulfonyl fluoride. Serine protease capable of cleaving pepsin A and human coagulation factor V, which may contribute to the mucosal hemorrhage observed in hemorrhagic colitis. The polypeptide is Serine protease EspP (espP) (Escherichia coli O157:H7).